The primary structure comprises 316 residues: Tyrosine recombinase XerD (316 aa).

The region spanning 4-97 is the Core-binding (CB) domain; sequence AALQTQLQGY…AVRGLHRFAV (94 aa). Residues 118-309 form the Tyr recombinase domain; sequence RLPKSLTVDE…TVQALREVWA (192 aa). Residues R162, K186, H261, R264, and H287 contribute to the active site. Y296 (O-(3'-phospho-DNA)-tyrosine intermediate) is an active-site residue.

This sequence belongs to the 'phage' integrase family. XerD subfamily. In terms of assembly, forms a cyclic heterotetrameric complex composed of two molecules of XerC and two molecules of XerD.

It localises to the cytoplasm. In terms of biological role, site-specific tyrosine recombinase, which acts by catalyzing the cutting and rejoining of the recombining DNA molecules. The XerC-XerD complex is essential to convert dimers of the bacterial chromosome into monomers to permit their segregation at cell division. It also contributes to the segregational stability of plasmids. This chain is Tyrosine recombinase XerD, found in Mycobacterium leprae (strain TN).